The primary structure comprises 1168 residues: MAPVYEGMASHVQVFSPHTLQSSAFCSVKKLKVEPSSNWDMTGYGSHSKLCSQSKNIPPSQPASTTVSTSLPIPNPSLPYEQTIIFPGSTGHIVVTSASSTSVTGQVLGGPHNLMRRSTVSLLDTYQKCGLKRKSEEIENTSSVQIIEEHPPMIQNNASGATVATATTSTATSKNSGSNSEGDYQLVQHEVLCSMTNTYEVLEFLGRGTFGQVVKCWKRGTNEIVAIKILKNHPSYARQGQIEVSILARLSTESADDYNFVRAYECFQHKNHTCLVFEMLEQNLYDFLKQNKFSPLPLKYIRPVLQQVATALMKLKSLGLIHADLKPENIMLVDPSRQPYRVKVIDFGSASHVSKAVCSTYLQSRYYRAPEIILGLPFCEAIDMWSLGCVIAELFLGWPLYPGASEYDQIRYISQTQGLPAEYLLSAGTKTTRFFNRDTDSPYPLWRLKTPDDHEAETGIKSKEARKYIFNCLDDMAQVSMTTDLEGSDMLVEKADRREFIDLLKKMLTIDADKRITPIETLNHPFVTMTHLLDFPHSTHVKSCFQNMEICKRRVNMYDTVNQSKTPFITHVAPSTSTNLTMTFNNQLTTVHNQPSAASMAAVAQRSMPLQTGTAQICARPDPFQQALIVCPPGFQGLQASPSKHAGYSVRMENAVPIVTQAPGAQPLQIQPGLLAQAWPGGAQQILLPPAWQQLTGVATHTSVQHAAVIPETMAGTQQLADWRNTHAHGSHYNPIMQQPTLLTGHVTLPAAQPLNVGVAHVMRQQPTSTTSSRKSKQHQPSMRNVSTCEVTSSQSTSSPQRSKRVKENTPPRCAMVHSSPACSTSVTCGWGDVASSTTRERQRQTIVIPDTPSPTVSVITISSDTDEEEEQKHAPTSTVSKQRKNVISCVTVHDSPYSDSSSNTSPYSVQQRTGHNGTNTLDTKGALENHCTGNPRTIIVPPLKTQASEVLVECDSLGPAVSTGHHSSSFKCKSSSTVTSTSGHSSGSSSGAIAYRQQRPGPHFQQQQPLNLSQAQPHMATDRTGSHRRQQAYITPTMAQAPYTFPHNSPSHGTVHPHLAAAAHLPTQPHLYTYTAPTALGSTGTVAHLVASQGSARHTVQHTAYPASIVHQVPVSMGPRVLPSPTIHPSQYPAQFAHQTYISASPASTVYTGYPLSPAKVNQYPYI.

A Phosphoserine modification is found at S16. A Glycyl lysine isopeptide (Lys-Gly) (interchain with G-Cter in SUMO); alternate cross-link involves residue K32. A Glycyl lysine isopeptide (Lys-Gly) (interchain with G-Cter in SUMO2); alternate cross-link involves residue K32. A transcriptional corepression region spans residues 97–230; that stretch reads SASSTSVTGQ…TNEIVAIKIL (134 aa). S118 and S135 each carry phosphoserine. T141 is subject to Phosphothreonine. Residues 189–520 are interaction with DAXX; that stretch reads HEVLCSMTNT…DADKRITPIE (332 aa). The Protein kinase domain occupies 199-527; sequence YEVLEFLGRG…PIETLNHPFV (329 aa). ATP is bound by residues 205-213 and K228; that span reads LGRGTFGQV. Phosphothreonine is present on residues T252 and T273. The active-site Proton acceptor is D324. Y361 bears the Phosphotyrosine mark. Residue S441 is modified to Phosphoserine. Phosphothreonine occurs at positions 482, 517, and 566. Positions 539–816 are interaction with SKI and SMAD1; sequence THVKSCFQNM…KENTPPRCAM (278 aa). Residues 595 to 772 form an interaction with DAZAP2 region; the sequence is PSAASMAAVA…MRQQPTSTTS (178 aa). S607 and S641 each carry phosphoserine. Position 660 is a phosphothreonine (T660). The interval 724–869 is interaction with POU4F1; that stretch reads RNTHAHGSHY…ITISSDTDEE (146 aa). Positions 746–848 are interaction with CTBP1; it reads HVTLPAAQPL…TRERQRQTIV (103 aa). The interaction with HMGA1 stretch occupies residues 759-869; sequence VAHVMRQQPT…ITISSDTDEE (111 aa). Positions 764–820 are disordered; that stretch reads RQQPTSTTSSRKSKQHQPSMRNVSTCEVTSSQSTSSPQRSKRVKENTPPRCAMVHSS. A compositionally biased stretch (polar residues) spans 765–791; that stretch reads QQPTSTTSSRKSKQHQPSMRNVSTCEV. The short motif at 774–777 is the Nuclear localization signal 1 (NLS1) element; it reads RKSK. Phosphoserine occurs at positions 787 and 799. The segment covering 792–801 has biased composition (low complexity); the sequence is TSSQSTSSPQ. The Nuclear localization signal 2 (NLS2) signature appears at 804–807; the sequence is KRVK. The segment at 812-907 is interaction with TP53 and TP73; that stretch reads PRCAMVHSSP…YSDSSSNTSP (96 aa). Residues 845–879 are interaction with UBE2I; sequence QTIVIPDTPSPTVSVITISSDTDEEEEQKHAPTST. Residues 845–952 form a localization to nuclear speckles region; the sequence is QTIVIPDTPS…PLKTQASEVL (108 aa). The required for localization to nuclear speckles stretch occupies residues 845 to 952; that stretch reads QTIVIPDTPS…PLKTQASEVL (108 aa). The interaction with UBL1 stretch occupies residues 854–876; it reads SPTVSVITISSDTDEEEEQKHAP. The tract at residues 856-880 is SUMO interaction motifs (SIM); required for nuclear localization and kinase activity; the sequence is TVSVITISSDTDEEEEQKHAPTSTV. A disordered region spans residues 894–936; the sequence is HDSPYSDSSSNTSPYSVQQRTGHNGTNTLDTKGALENHCTGNP. Over residues 895–909 the composition is skewed to low complexity; that stretch reads DSPYSDSSSNTSPYS. S906 is modified (phosphoserine). The interaction with AXIN1 stretch occupies residues 907-1022; sequence PYSVQQRTGH…LSQAQPHMAT (116 aa). Residues 910–923 are compositionally biased toward polar residues; that stretch reads VQQRTGHNGTNTLD. Glycyl lysine isopeptide (Lys-Gly) (interchain with G-Cter in SUMO2) cross-links involve residues K925 and K945. The interval 956–1168 is autoinhibitory domain (AID); sequence DSLGPAVSTG…PAKVNQYPYI (213 aa). The disordered stretch occupies residues 960 to 1030; that stretch reads PAVSTGHHSS…ATDRTGSHRR (71 aa). A Phosphoserine modification is found at S963. Low complexity-rich tracts occupy residues 965–991 and 998–1018; these read GHHS…GSSS and QQRP…QAQP. Phosphoserine is present on residues S1014, S1125, and S1158. Residue K1161 forms a Glycyl lysine isopeptide (Lys-Gly) (interchain with G-Cter in SUMO) linkage.

The protein belongs to the protein kinase superfamily. CMGC Ser/Thr protein kinase family. HIPK subfamily. In terms of assembly, interacts with CREB1, SIAH1, WSB1, CBX4, TRADD, p53/TP53, TP73, TP63, CREBBP, DAXX, P53DINP1, SKI, SMAD1, SMAD2 and SMAD3, but not SMAD4. Interacts with ATF1, PML, RUNX1, EP300, NKX1-2, NKX2-5, UBE2I, HMGA1, CTBP1, AXIN1, NLK, MYB, POU4F1, POU4F2, POU4F3, UBE2I, UBL1 and ZBTB4. Probably part of a complex consisting of p53/TP53, HIPK2 and AXIN1. Interacts with SP100; positively regulates TP53-dependent transcription. Interacts with DAZAP2; the interaction results in phosphorylation of DAZAP2 which causes localization of DAZAP2 to the nucleus, reduces interaction of DAZAP2 with HIPK2 and prevents DAZAP2-dependent degradation of HIPK2. Interacts with SIAH1; the interaction is promoted by DAZAP2 and results in SIAH1-mediated ubiquitination and subsequent proteasomal degradation of HIPK2. Autophosphorylation at Tyr-361 in the activation loop activates the kinase and promotes nuclear localization. Post-translationally, sumoylated. When conjugated it is directed to nuclear speckles. Desumoylated by SENP1. Sumoylation on Lys-32 is promoted by the E3 SUMO-protein ligase CBX4. In terms of processing, ubiquitinated by FBXO3, WSB1 and SIAH1, leading to rapid proteasome-dependent degradation. The degradation mediated by FBXO3, but not ubiquitination, is prevented in the presence of PML. The degradation mediated by WSB1 and SIAH1 is reversibly reduced upon DNA damage. Cleaved at Asp-895 and Asp-956 by CASP6 in a p53/TP53-dependent manner. The cleaved form lacks the autoinhibitory C-terminal domain (AID), resulting in a hyperactive kinase, which potentiates p53/TP53 Ser-46 phosphorylation and subsequent activation of the cell death machinery.

It is found in the nucleus. It localises to the PML body. The protein resides in the cytoplasm. The catalysed reaction is L-seryl-[protein] + ATP = O-phospho-L-seryl-[protein] + ADP + H(+). It catalyses the reaction L-threonyl-[protein] + ATP = O-phospho-L-threonyl-[protein] + ADP + H(+). Functionally, serine/threonine-protein kinase involved in transcription regulation, p53/TP53-mediated cellular apoptosis and regulation of the cell cycle. Acts as a corepressor of several transcription factors, including SMAD1 and POU4F1/Brn3a and probably NK homeodomain transcription factors. Phosphorylates PDX1, ATF1, PML, p53/TP53, CREB1, CTBP1, CBX4, RUNX1, EP300, CTNNB1, HMGA1, ZBTB4 and DAZAP2. Inhibits cell growth and promotes apoptosis through the activation of p53/TP53 both at the transcription level and at the protein level (by phosphorylation and indirect acetylation). The phosphorylation of p53/TP53 may be mediated by a p53/TP53-HIPK2-AXIN1 complex. Involved in the response to hypoxia by acting as a transcriptional co-suppressor of HIF1A. Mediates transcriptional activation of TP73. In response to TGFB, cooperates with DAXX to activate JNK. Negative regulator through phosphorylation and subsequent proteasomal degradation of CTNNB1 and the antiapoptotic factor CTBP1. In the Wnt/beta-catenin signaling pathway acts as an intermediate kinase between MAP3K7/TAK1 and NLK to promote the proteasomal degradation of MYB. Phosphorylates CBX4 upon DNA damage and promotes its E3 SUMO-protein ligase activity. Activates CREB1 and ATF1 transcription factors by phosphorylation in response to genotoxic stress. In response to DNA damage, stabilizes PML by phosphorylation. PML, HIPK2 and FBXO3 may act synergically to activate p53/TP53-dependent transactivation. Promotes angiogenesis, and is involved in erythroid differentiation, especially during fetal liver erythropoiesis. Phosphorylation of RUNX1 and EP300 stimulates EP300 transcription regulation activity. Triggers ZBTB4 protein degradation in response to DNA damage. In response to DNA damage, phosphorylates DAZAP2 which localizes DAZAP2 to the nucleus, reduces interaction of DAZAP2 with HIPK2 and prevents DAZAP2-dependent ubiquitination of HIPK2 by E3 ubiquitin-protein ligase SIAH1 and subsequent proteasomal degradation. Modulates HMGA1 DNA-binding affinity. In response to high glucose, triggers phosphorylation-mediated subnuclear localization shifting of PDX1. Involved in the regulation of eye size, lens formation and retinal lamination during late embryogenesis. The protein is Homeodomain-interacting protein kinase 2 (Hipk2) of Mesocricetus auratus (Golden hamster).